Here is a 236-residue protein sequence, read N- to C-terminus: Purine nucleoside phosphorylase CA_C1699 (236 aa).

3 residues coordinate Zn(2+): His-62, Cys-97, and His-114.

Belongs to the purine nucleoside phosphorylase YfiH/LACC1 family. Homodimer. Requires Cu(2+) as cofactor. The cofactor is Zn(2+).

The catalysed reaction is adenosine + phosphate = alpha-D-ribose 1-phosphate + adenine. The enzyme catalyses S-methyl-5'-thioadenosine + phosphate = 5-(methylsulfanyl)-alpha-D-ribose 1-phosphate + adenine. It catalyses the reaction inosine + phosphate = alpha-D-ribose 1-phosphate + hypoxanthine. It carries out the reaction adenosine + H2O + H(+) = inosine + NH4(+). Functionally, purine nucleoside enzyme that catalyzes the phosphorolysis of adenosine and inosine nucleosides, yielding D-ribose 1-phosphate and the respective free bases, adenine and hypoxanthine. Also catalyzes the phosphorolysis of S-methyl-5'-thioadenosine into adenine and S-methyl-5-thio-alpha-D-ribose 1-phosphate. Also has adenosine deaminase activity. This Clostridium acetobutylicum (strain ATCC 824 / DSM 792 / JCM 1419 / IAM 19013 / LMG 5710 / NBRC 13948 / NRRL B-527 / VKM B-1787 / 2291 / W) protein is Purine nucleoside phosphorylase CA_C1699.